We begin with the raw amino-acid sequence, 421 residues long: Tyrosine--tRNA ligase (421 aa).

Tyrosine 35 contributes to the L-tyrosine binding site. Positions 40–49 (PTADSLHIGH) match the 'HIGH' region motif. Residues tyrosine 170 and glutamine 174 each contribute to the L-tyrosine site. The short motif at 232–236 (KFGKT) is the 'KMSKS' region element. An ATP-binding site is contributed by lysine 235. One can recognise an S4 RNA-binding domain in the interval 355 to 421 (LSLVDVLVES…GKKKYFLITY (67 aa)).

The protein belongs to the class-I aminoacyl-tRNA synthetase family. TyrS type 1 subfamily. As to quaternary structure, homodimer.

It localises to the cytoplasm. The catalysed reaction is tRNA(Tyr) + L-tyrosine + ATP = L-tyrosyl-tRNA(Tyr) + AMP + diphosphate + H(+). Functionally, catalyzes the attachment of tyrosine to tRNA(Tyr) in a two-step reaction: tyrosine is first activated by ATP to form Tyr-AMP and then transferred to the acceptor end of tRNA(Tyr). This is Tyrosine--tRNA ligase from Bacillus velezensis (strain DSM 23117 / BGSC 10A6 / LMG 26770 / FZB42) (Bacillus amyloliquefaciens subsp. plantarum).